Here is a 151-residue protein sequence, read N- to C-terminus: FAD synthase (151 aa).

ATP is bound by residues 12–13 (TF), 17–20 (HPGH), Asp-97, and Tyr-125.

It belongs to the archaeal FAD synthase family. Homodimer. Requires a divalent metal cation as cofactor.

It carries out the reaction FMN + ATP + H(+) = FAD + diphosphate. Its pathway is cofactor biosynthesis; FAD biosynthesis; FAD from FMN: step 1/1. Its function is as follows. Catalyzes the transfer of the AMP portion of ATP to flavin mononucleotide (FMN) to produce flavin adenine dinucleotide (FAD) coenzyme. This chain is FAD synthase, found in Methanocaldococcus sp. (strain FS406-22).